We begin with the raw amino-acid sequence, 104 residues long: Thioredoxin (104 aa).

A Thioredoxin domain is found at 2-104 (AIVKVTDSNF…NLAEVIEKHL (103 aa)). A disulfide bridge links C29 with C32.

Belongs to the thioredoxin family.

Component of the thioredoxin-thioredoxin reductase system. Participates in various redox reactions through the reversible oxidation of its active center dithiol to a disulfide and catalyzes dithiol-disulfide exchange reactions. The chain is Thioredoxin (trxA) from Staphylococcus saprophyticus subsp. saprophyticus (strain ATCC 15305 / DSM 20229 / NCIMB 8711 / NCTC 7292 / S-41).